The following is an 885-amino-acid chain: Alanine--tRNA ligase (885 aa).

Zn(2+)-binding residues include histidine 572, histidine 576, cysteine 675, and histidine 679.

The protein belongs to the class-II aminoacyl-tRNA synthetase family. Zn(2+) is required as a cofactor.

It is found in the cytoplasm. The catalysed reaction is tRNA(Ala) + L-alanine + ATP = L-alanyl-tRNA(Ala) + AMP + diphosphate. Its function is as follows. Catalyzes the attachment of alanine to tRNA(Ala) in a two-step reaction: alanine is first activated by ATP to form Ala-AMP and then transferred to the acceptor end of tRNA(Ala). Also edits incorrectly charged Ser-tRNA(Ala) and Gly-tRNA(Ala) via its editing domain. The polypeptide is Alanine--tRNA ligase (Leifsonia xyli subsp. xyli (strain CTCB07)).